We begin with the raw amino-acid sequence, 372 residues long: tRNA-specific 2-thiouridylase MnmA (372 aa).

ATP-binding positions include 16-23 and methionine 42; that span reads GMSGGVDS. Positions 102–104 are interaction with target base in tRNA; that stretch reads NPD. The active-site Nucleophile is the cysteine 107. Cysteine 107 and cysteine 205 are disulfide-bonded. Residue glycine 132 coordinates ATP. Residues 155–157 form an interaction with tRNA region; the sequence is KDQ. Catalysis depends on cysteine 205, which acts as the Cysteine persulfide intermediate. The tract at residues 317 to 318 is interaction with tRNA; sequence RY.

The protein belongs to the MnmA/TRMU family.

The protein localises to the cytoplasm. The catalysed reaction is S-sulfanyl-L-cysteinyl-[protein] + uridine(34) in tRNA + AH2 + ATP = 2-thiouridine(34) in tRNA + L-cysteinyl-[protein] + A + AMP + diphosphate + H(+). Functionally, catalyzes the 2-thiolation of uridine at the wobble position (U34) of tRNA, leading to the formation of s(2)U34. This Shewanella baltica (strain OS195) protein is tRNA-specific 2-thiouridylase MnmA.